The primary structure comprises 236 residues: Probable apoptosis inhibitor 2 (236 aa).

A BIR repeat occupies Arg85–Arg150. The Zn(2+) site is built by Cys123, Cys126, His142, and Cys146. Residues Cys189–Cys223 form an RING-type zinc finger.

This is Probable apoptosis inhibitor 2 (IAP2) from Orgyia pseudotsugata multicapsid polyhedrosis virus (OpMNPV).